The sequence spans 76 residues: Large ribosomal subunit protein bL28 (76 aa).

The disordered stretch occupies residues 21–42 (RGKAKKEGGVGKHITKTSRRRQ). Basic residues predominate over residues 33–42 (HITKTSRRRQ).

This sequence belongs to the bacterial ribosomal protein bL28 family.

The polypeptide is Large ribosomal subunit protein bL28 (Halothermothrix orenii (strain H 168 / OCM 544 / DSM 9562)).